We begin with the raw amino-acid sequence, 405 residues long: uncharacterized protein (405 aa).

Helical transmembrane passes span 9–29 (VFAL…VTIV), 41–61 (VFLA…ASFC), 74–94 (VLAG…YSVT), 98–118 (QAFF…GAFF), 138–158 (ANGV…GLGG), 168–190 (LVVG…LHVN), 227–247 (ALAG…AVLH), 252–272 (WWGM…VIAI), 291–311 (LVMS…LCAL), and 373–393 (IAFI…LAQP).

The protein belongs to the major facilitator superfamily. Drug:H(+) antiporter-3 (DHA3) (TC 2.A.1.21) family.

Its subcellular location is the cell membrane. This is an uncharacterized protein from Bacillus subtilis (strain 168).